Here is a 237-residue protein sequence, read N- to C-terminus: Ribosomal RNA small subunit methyltransferase G (237 aa).

S-adenosyl-L-methionine is bound by residues Gly78, Phe83, 129–130, and Arg148; that span reads AE.

Belongs to the methyltransferase superfamily. RNA methyltransferase RsmG family.

The protein resides in the cytoplasm. Specifically methylates the N7 position of a guanine in 16S rRNA. The protein is Ribosomal RNA small subunit methyltransferase G of Streptococcus equi subsp. zooepidemicus (strain H70).